Here is a 256-residue protein sequence, read N- to C-terminus: 5-oxoprolinase subunit A (256 aa).

The protein belongs to the LamB/PxpA family. As to quaternary structure, forms a complex composed of PxpA, PxpB and PxpC.

It catalyses the reaction 5-oxo-L-proline + ATP + 2 H2O = L-glutamate + ADP + phosphate + H(+). Its function is as follows. Catalyzes the cleavage of 5-oxoproline to form L-glutamate coupled to the hydrolysis of ATP to ADP and inorganic phosphate. This chain is 5-oxoprolinase subunit A, found in Azoarcus sp. (strain BH72).